Here is a 265-residue protein sequence, read N- to C-terminus: UPF0354 protein GWCH70_2742 (265 aa).

Belongs to the UPF0354 family.

In Geobacillus sp. (strain WCH70), this protein is UPF0354 protein GWCH70_2742.